Consider the following 691-residue polypeptide: Elongation factor G (691 aa).

One can recognise a tr-type G domain in the interval glutamate 8–leucine 283. Residues alanine 17–threonine 24, aspartate 81–histidine 85, and asparagine 135–aspartate 138 contribute to the GTP site.

Belongs to the TRAFAC class translation factor GTPase superfamily. Classic translation factor GTPase family. EF-G/EF-2 subfamily.

It is found in the cytoplasm. In terms of biological role, catalyzes the GTP-dependent ribosomal translocation step during translation elongation. During this step, the ribosome changes from the pre-translocational (PRE) to the post-translocational (POST) state as the newly formed A-site-bound peptidyl-tRNA and P-site-bound deacylated tRNA move to the P and E sites, respectively. Catalyzes the coordinated movement of the two tRNA molecules, the mRNA and conformational changes in the ribosome. This is Elongation factor G from Lawsonia intracellularis (strain PHE/MN1-00).